The primary structure comprises 250 residues: 5-oxoprolinase subunit A (250 aa).

This sequence belongs to the LamB/PxpA family. Forms a complex composed of PxpA, PxpB and PxpC.

The catalysed reaction is 5-oxo-L-proline + ATP + 2 H2O = L-glutamate + ADP + phosphate + H(+). In terms of biological role, catalyzes the cleavage of 5-oxoproline to form L-glutamate coupled to the hydrolysis of ATP to ADP and inorganic phosphate. The polypeptide is 5-oxoprolinase subunit A (Streptomyces avermitilis (strain ATCC 31267 / DSM 46492 / JCM 5070 / NBRC 14893 / NCIMB 12804 / NRRL 8165 / MA-4680)).